Reading from the N-terminus, the 334-residue chain is MLYYVPRREKSYMNIKPHLFGLNRSNRDFSLRETWGKNQFNSSFPVSLCCYMSSKGILANYLSIENAEIKCSSIDIKDVFEIEPENENTFFAFETSHSIKLTALPDHTTCDLTDADFGSEIVIRPDSIVYLACSLAEILKESLANCMDIPNNVDHLDWSEPKQVIPLFPHILSTLNNLCSRADTIQTPFLLQPVWKTLGKSPRLADNCLDIFIWSDVAFVKFILEISNLNVNVLSINRQTRTAIWLYKMLVDIVKYGRFNHHKIIDLCSYNTKNDKAFASSGMITNVFMKSERLERPIIMKSEIKNIILGGGQELLSPERRFDAIIYNSSELFR.

The catalysed reaction is Endonucleolytic cleavage of DNA to give specific double-stranded fragments with terminal 5'-phosphates.. Functionally, a P subtype restriction enzyme that recognizes the double-stranded sequence 5'-GRCGYC-3'; the cleavage site is unknown. The chain is Probable type II restriction enzyme HindVP (hindVRP) from Haemophilus influenzae (strain ATCC 51907 / DSM 11121 / KW20 / Rd).